The chain runs to 1068 residues: Integrator complex subunit 3 homolog (1068 aa).

Disordered regions lie at residues 916 to 939 (YPSSSPNKRKRPPKGISVSTSTPS) and 1001 to 1068 (VGRR…NDSD). A phosphoserine mark is found at Ser-1038, Ser-1039, Ser-1043, and Ser-1044.

Belongs to the Integrator subunit 3 family. As to quaternary structure, belongs to the multiprotein complex Integrator, at least composed of IntS1, IntS2, IntS3, IntS4, omd/IntS5, IntS6, defl/IntS7, IntS8, IntS9, IntS10, IntS11, IntS12, asun/IntS13, IntS14 and IntS15. The core complex associates with protein phosphatase 2A subunits mts/PP2A and Pp2A-29B, to form the Integrator-PP2A (INTAC) complex.

It is found in the nucleus. Its subcellular location is the cytoplasm. Functionally, component of the integrator complex, a multiprotein complex that terminates RNA polymerase II (Pol II) transcription in the promoter-proximal region of genes. The integrator complex provides a quality checkpoint during transcription elongation by driving premature transcription termination of transcripts that are unfavorably configured for transcriptional elongation: the complex terminates transcription by (1) catalyzing dephosphorylation of the C-terminal domain (CTD) of Pol II subunit Polr2A/Rbp1 and Spt5, and (2) degrading the exiting nascent RNA transcript via endonuclease activity. The integrator complex is also involved in the 3'-end processing of the U7 snRNA, and also the spliceosomal snRNAs U1, U2, U4 and U5. In Drosophila sechellia (Fruit fly), this protein is Integrator complex subunit 3 homolog (IntS3).